A 216-amino-acid polypeptide reads, in one-letter code: Molybdenum cofactor guanylyltransferase (216 aa).

Residues Leu16–Gly18, Lys28, Asn57, Asp73, and Asp108 each bind GTP. Position 108 (Asp108) interacts with Mg(2+).

It belongs to the MobA family. In terms of assembly, monomer. Mg(2+) is required as a cofactor.

Its subcellular location is the cytoplasm. The enzyme catalyses Mo-molybdopterin + GTP + H(+) = Mo-molybdopterin guanine dinucleotide + diphosphate. Transfers a GMP moiety from GTP to Mo-molybdopterin (Mo-MPT) cofactor (Moco or molybdenum cofactor) to form Mo-molybdopterin guanine dinucleotide (Mo-MGD) cofactor. The chain is Molybdenum cofactor guanylyltransferase from Rhizobium rhizogenes (strain K84 / ATCC BAA-868) (Agrobacterium radiobacter).